The following is a 132-amino-acid chain: Small ribosomal subunit protein uS8 (132 aa).

This sequence belongs to the universal ribosomal protein uS8 family. As to quaternary structure, part of the 30S ribosomal subunit. Contacts proteins S5 and S12.

One of the primary rRNA binding proteins, it binds directly to 16S rRNA central domain where it helps coordinate assembly of the platform of the 30S subunit. The sequence is that of Small ribosomal subunit protein uS8 from Bartonella quintana (strain Toulouse) (Rochalimaea quintana).